Reading from the N-terminus, the 48-residue chain is Lantibiotic salivaricin-A (48 aa).

Positions 1–26 are excised as a propeptide; that stretch reads MKNSKDILNNAIEEVSEKELMEVAGG. 2 consecutive cross-links (beta-methyllanthionine (Thr-Cys)) follow at residues 35 to 40 and 37 to 47; these read TITDDC and TDDCPNSVFVC. The segment at residues 43–48 is a cross-link (lanthionine (Ser-Cys)); the sequence is SVFVCC.

This sequence belongs to the type A lantibiotic family. In terms of processing, maturation of lantibiotics involves the enzymatic conversion of Thr, and Ser into dehydrated AA and the formation of thioether bonds with cysteine. This is followed by membrane translocation and cleavage of the modified precursor.

Functionally, lanthionine-containing peptide antibiotic (lantibiotic) active on Gram-positive bacteria. The bactericidal activity of lantibiotics is based on depolarization of energized bacterial cytoplasmic membranes, initiated by the formation of aqueous transmembrane pores. This is Lantibiotic salivaricin-A (salA) from Streptococcus salivarius.